The chain runs to 475 residues: Gelsolin-like protein 1 (475 aa).

The segment at 1 to 131 (MGGTSLDPAL…GYRHVDDQFK (131 aa)) is actin binding, actin severing, Ca-sensitive. The tract at residues 1-239 (MGGTSLDPAL…VRKVSKGKDD (239 aa)) is necessary for barbed end capping activity. A Gelsolin-like 1 repeat occupies 27-105 (FVLEPVPEVD…IQNYESPLFL (79 aa)). Residues 70-73 (DEIG) are actin-actin interfilament contact point. Positions 106 to 147 (SYFPDGIRYVSGGYESGYRHVDDQFKNWKPHLFHCKGKRNVR) are required for synapse elimination during development. The interval 133–227 (WKPHLFHCKG…STFWSYFGGV (95 aa)) is required for phosphatidylinositol 4,5-bisphosphate binding and regulation. Gelsolin-like repeat units lie at residues 148-208 (CTEV…KVHI), 275-341 (RKEQ…STQF), and 375-447 (EIAN…PPTF). An F- and G-actin binding, Ca-independent region spans residues 240-475 (DDNYWKRLTE…VQNMRRLLFH (236 aa)). The inhibitory for phosphatidylinositol 4,5-bisphosphate binding activity stretch occupies residues 248–348 (TEQITLWKVS…TQFTQWFRDW (101 aa)).

It belongs to the villin/gelsolin family. Monomer. Binds to actin monomers and filaments. Cleavage by caspase ced-3 activates its actin-severing function and is required for the elimination of presynaptic components during development.

The protein resides in the cytoplasm. Its subcellular location is the cytoskeleton. In terms of biological role, calcium-regulated, actin-modulating protein that binds to the plus (or barbed) ends of actin monomers or filaments, preventing monomer exchange (end-blocking or capping). Binds actin but does not nucleate actin polymerization, albeit slows down elongation by blocking the barbed ends. By promoting actin depolymerization, required for the elimination of presynaptic components downstream of the egl-1, ced-4 and ced-3 apoptotic pathway during larval development. The sequence is that of Gelsolin-like protein 1 from Caenorhabditis elegans.